The sequence spans 396 residues: Phosphoglycerate kinase (396 aa).

Substrate is bound by residues 21–23 (DLN), R36, 59–62 (HLGR), R113, and R146. ATP contacts are provided by residues K197, E319, and 345–348 (GGDT).

This sequence belongs to the phosphoglycerate kinase family. In terms of assembly, monomer.

It localises to the cytoplasm. It carries out the reaction (2R)-3-phosphoglycerate + ATP = (2R)-3-phospho-glyceroyl phosphate + ADP. It participates in carbohydrate degradation; glycolysis; pyruvate from D-glyceraldehyde 3-phosphate: step 2/5. This is Phosphoglycerate kinase from Legionella pneumophila (strain Paris).